A 399-amino-acid polypeptide reads, in one-letter code: Elongation factor Tu (399 aa).

One can recognise a tr-type G domain in the interval K10–V207. Residues G19–T26 form a G1 region. Position 19-26 (G19–T26) interacts with GTP. T26 contributes to the Mg(2+) binding site. Positions G60 to N64 are G2. Residues D81 to G84 are G3. GTP-binding positions include D81–H85 and N136–D139. The tract at residues N136–D139 is G4. A G5 region spans residues S173–L175.

Belongs to the TRAFAC class translation factor GTPase superfamily. Classic translation factor GTPase family. EF-Tu/EF-1A subfamily. As to quaternary structure, monomer.

The protein localises to the cytoplasm. The enzyme catalyses GTP + H2O = GDP + phosphate + H(+). Functionally, GTP hydrolase that promotes the GTP-dependent binding of aminoacyl-tRNA to the A-site of ribosomes during protein biosynthesis. This is Elongation factor Tu from Fervidobacterium islandicum.